We begin with the raw amino-acid sequence, 148 residues long: MKVIFLKDVKGKAKKGDVKNVPDGYARNYLLKNNLAEEATSGNMKALEAKKQKADQLEQKEKEDAINLKDKLAEIAVELEAKSGDNGRLFGSITSKQISEALQKQFGHKIDKRKIELDEPIRALGYTTVPVKLHPEVSGSIKVHVAEK.

This sequence belongs to the bacterial ribosomal protein bL9 family.

Its function is as follows. Binds to the 23S rRNA. This chain is Large ribosomal subunit protein bL9, found in Oceanobacillus iheyensis (strain DSM 14371 / CIP 107618 / JCM 11309 / KCTC 3954 / HTE831).